We begin with the raw amino-acid sequence, 252 residues long: Imidazole glycerol phosphate synthase subunit HisF (252 aa).

Active-site residues include Asp11 and Asp130.

Belongs to the HisA/HisF family. In terms of assembly, heterodimer of HisH and HisF.

Its subcellular location is the cytoplasm. It carries out the reaction 5-[(5-phospho-1-deoxy-D-ribulos-1-ylimino)methylamino]-1-(5-phospho-beta-D-ribosyl)imidazole-4-carboxamide + L-glutamine = D-erythro-1-(imidazol-4-yl)glycerol 3-phosphate + 5-amino-1-(5-phospho-beta-D-ribosyl)imidazole-4-carboxamide + L-glutamate + H(+). It functions in the pathway amino-acid biosynthesis; L-histidine biosynthesis; L-histidine from 5-phospho-alpha-D-ribose 1-diphosphate: step 5/9. Its function is as follows. IGPS catalyzes the conversion of PRFAR and glutamine to IGP, AICAR and glutamate. The HisF subunit catalyzes the cyclization activity that produces IGP and AICAR from PRFAR using the ammonia provided by the HisH subunit. The sequence is that of Imidazole glycerol phosphate synthase subunit HisF from Azoarcus sp. (strain BH72).